Here is a 476-residue protein sequence, read N- to C-terminus: Cysteine--tRNA ligase (476 aa).

Position 29 (cysteine 29) interacts with Zn(2+). The 'HIGH' region motif lies at 31–41 (PTVYDYTHIGH). Zn(2+) is bound by residues cysteine 209, histidine 234, and glutamate 238. Positions 266-270 (KMSKS) match the 'KMSKS' region motif. Residue lysine 269 coordinates ATP.

This sequence belongs to the class-I aminoacyl-tRNA synthetase family. It depends on Zn(2+) as a cofactor.

Its subcellular location is the cytoplasm. It catalyses the reaction tRNA(Cys) + L-cysteine + ATP = L-cysteinyl-tRNA(Cys) + AMP + diphosphate. This chain is Cysteine--tRNA ligase, found in Thermococcus kodakarensis (strain ATCC BAA-918 / JCM 12380 / KOD1) (Pyrococcus kodakaraensis (strain KOD1)).